The following is a 52-amino-acid chain: TVDCSDYPKPVCTLEEMPLCGSDNKTYGNKCNFCNAVVDSNGTLTLSHFGKC.

Positions 2–52 constitute a Kazal-like domain; that stretch reads VDCSDYPKPVCTLEEMPLCGSDNKTYGNKCNFCNAVVDSNGTLTLSHFGKC. Disulfide bonds link Cys-4–Cys-34, Cys-12–Cys-31, and Cys-20–Cys-52. Residue Asn-41 is glycosylated (N-linked (GlcNAc...) asparagine).

It localises to the secreted. This chain is Ovomucoid, found in Scythrops novaehollandiae (Channel-billed cuckoo).